We begin with the raw amino-acid sequence, 302 residues long: Large ribosomal subunit protein bL28m (302 aa).

It belongs to the bacterial ribosomal protein bL28 family. Component of the mitochondrial ribosome large subunit (39S) which comprises a 16S rRNA and about 50 distinct proteins.

The protein localises to the mitochondrion. This chain is Large ribosomal subunit protein bL28m (mRpL28), found in Drosophila melanogaster (Fruit fly).